The sequence spans 518 residues: Integrator complex subunit 14 (518 aa).

One can recognise a VWFA domain in the interval 2-204 (PTVVVMDVSL…KNVQSMFGKL (203 aa)). Ser10, Ser12, and Thr86 together coordinate Mg(2+). Lys418 carries the N6-acetyllysine modification.

This sequence belongs to the Integrator subunit 14 family. Component of the Integrator complex, composed of core subunits INTS1, INTS2, INTS3, INTS4, INTS5, INTS6, INTS7, INTS8, INTS9/RC74, INTS10, INTS11/CPSF3L, INTS12, INTS13, INTS14 and INTS15. The core complex associates with protein phosphatase 2A subunits PPP2CA and PPP2R1A, to form the Integrator-PP2A (INTAC) complex. INTS14 is part of the tail subcomplex, composed of INTS10, INTS13, INTS14 and INTS15. In terms of tissue distribution, strongly expressed in numerous cancer cells compared with their non-cancerous counterparts (lung, prostate, colon, stomach and skin).

The protein localises to the nucleus. Its function is as follows. Component of the integrator complex, a multiprotein complex that terminates RNA polymerase II (Pol II) transcription in the promoter-proximal region of genes. The integrator complex provides a quality checkpoint during transcription elongation by driving premature transcription termination of transcripts that are unfavorably configured for transcriptional elongation: the complex terminates transcription by (1) catalyzing dephosphorylation of the C-terminal domain (CTD) of Pol II subunit POLR2A/RPB1 and SUPT5H/SPT5, (2) degrading the exiting nascent RNA transcript via endonuclease activity and (3) promoting the release of Pol II from bound DNA. The integrator complex is also involved in terminating the synthesis of non-coding Pol II transcripts, such as enhancer RNAs (eRNAs), small nuclear RNAs (snRNAs), telomerase RNAs and long non-coding RNAs (lncRNAs). Within the integrator complex, INTS14 is part of the integrator tail module that acts as a platform for the recruitment of transcription factors at promoters. The protein is Integrator complex subunit 14 of Homo sapiens (Human).